Reading from the N-terminus, the 427-residue chain is Stemphyloxin II biosynthesis cluster transcription factor sthR (427 aa).

The zn(2)-C6 fungal-type DNA-binding region spans 15–45 (CDRCRKQKLRCPPDKDDMGTCGRCLRAGVAC). The interval 51-70 (KPRGRSQKHGISTDGTSHVS) is disordered. Over residues 59–69 (HGISTDGTSHV) the composition is skewed to polar residues.

It is found in the nucleus. Its function is as follows. Transcription factor that regulates the expression of the gene cluster that mediates the biosynthesis of the phytotoxin stemphyloxin II. In Phaeosphaeria nodorum (strain SN15 / ATCC MYA-4574 / FGSC 10173) (Glume blotch fungus), this protein is Stemphyloxin II biosynthesis cluster transcription factor sthR.